Here is a 1008-residue protein sequence, read N- to C-terminus: SPAMPVPGPMGPMGPRGPPGSPGASGPQGFGPAGPPGKNGEDGESGKPGRGGERGPPGPQGARGFSGLDGAKGDSGPAGPKGESGAPGENGTPGAMGPRGAAGAAGARGNDGAAGAAGPPGPTGPAGPPGFPGGPGAKGDAGAQGGRGPEGPAGARGEPGNPGPAGAAGPSGNPGTDGAAGPKGTPGAAGVAGAPGFPGPRGPSGPQGAAGAPGPKGEAGAKGEAGAPGVQGPPGPSGEEGKRGARGEPGAAGARGGPGGRGFPGTDGPAGPKGATGERGAPGAVGPKGATGEPGRTGEPGLPGAKGMTGSPGSPGPDGKTGPAGPSGQDGRPGPPGPVGARGQPGVMGFPGPKGAAGEGGKPGERGPSGPAGPAGERGEQGPAGAPGFQGLPGPQGALGETGKPGEQGLPGEAGATGPAGARGDRGFPGERGAKGDAGAPGAPGAQGPPGLQGMPGERGAAGLPGLRGDRGDQGAKGADGAPGKDGPRGLTGPLGLPGPAGATGDKGESGPAGAVGPAGARGAPGERGESGPPGPAGFAGPPGADGQPGAKGEAGDNGAKGDAGPPGAAGPTGAPGPQGPVGNTGAKGARATGFPGAAGRVGPPGPSGNPGPPGPAGGPGKEGPKGNRGETGPAGRPGELGAAGPPGPAGEKGSPGSEGATGSAGLPGPQGLAGQRGLPGQRGERGFPGLPGPSGEAGGPSGPGGERGPPGPMGPPGLAGAPGEPGREGSPGNEGSAGRDGAAGPKGDRGESGPSGAPGAPGPPGAPGPVGPAGKNGDRGETGPAGPAGSAGPSGPRGPAGAPGLRGDKGESGEAGERRGFTGMQGPPGPSGSSGEQGPAGAAGPAGPRGPAGSAGSPGKDGMSGLPGPTGPPGPRSGEMGPAGPPGPPGPPGAPGAPGGGFDLGFLSQPQEKAPDPFRDRDLEVDSTLKSLSQQLEQLRSPDGTRSKPEDVNLQLTFLRNSVAYMDASAGNLKKATSRLPLLDLAPMDVGAPDQEFGLEVGPVCFL.

The segment covering 1–21 (SPAMPVPGPMGPMGPRGPPGS) has biased composition (pro residues). The segment at 1 to 920 (SPAMPVPGPM…PQEKAPDPFR (920 aa)) is disordered. Positions 39 to 53 (NGEDGESGKPGRGGE) are enriched in basic and acidic residues. Residues 92–117 (TPGAMGPRGAAGAAGARGNDGAAGAA) are compositionally biased toward low complexity. The span at 119-132 (PPGPTGPAGPPGFP) shows a compositional bias: pro residues. The segment covering 133-151 (GGPGAKGDAGAQGGRGPEG) has biased composition (gly residues). 2 stretches are compositionally biased toward low complexity: residues 152-195 (PAGA…AGAP) and 204-230 (SGPQGAAGAPGPKGEAGAKGEAGAPGV). The segment covering 253 to 265 (GARGGPGGRGFPG) has biased composition (gly residues). 2 stretches are compositionally biased toward low complexity: residues 339–354 (VGARGQPGVMGFPGPK) and 410–422 (LPGEAGATGPAGA). Residues 423 to 435 (RGDRGFPGERGAK) are compositionally biased toward basic and acidic residues. 3 stretches are compositionally biased toward low complexity: residues 437 to 456 (DAGAPGAPGAQGPPGLQGMP), 489 to 524 (RGLTGPLGLPGPAGATGDKGESGPAGAVGPAGARGA), and 537 to 573 (AGFAGPPGADGQPGAKGEAGDNGAKGDAGPPGAAGPT). A compositionally biased stretch (pro residues) spans 604–617 (PPGPSGNPGPPGPA). The segment covering 634–661 (PAGRPGELGAAGPPGPAGEKGSPGSEGA) has biased composition (low complexity). Gly residues predominate over residues 696-709 (GEAGGPSGPGGERG). Low complexity predominate over residues 717-735 (PGLAGAPGEPGREGSPGNE). Residues 761 to 771 (APGPPGAPGPV) show a composition bias toward pro residues. A compositionally biased stretch (low complexity) spans 785–806 (PAGPAGSAGPSGPRGPAGAPGL). Over residues 807 to 821 (RGDKGESGEAGERRG) the composition is skewed to basic and acidic residues. Low complexity predominate over residues 832 to 868 (SGSSGEQGPAGAAGPAGPRGPAGSAGSPGKDGMSGLP). Pro residues predominate over residues 884–896 (AGPPGPPGPPGAP). A Fibrillar collagen NC1 domain is found at 978-1008 (TSRLPLLDLAPMDVGAPDQEFGLEVGPVCFL).

This sequence belongs to the fibrillar collagen family.

The protein resides in the secreted. It localises to the extracellular space. The protein localises to the extracellular matrix. In Epinephelus aeneus (White grouper), this protein is Collagen, type I, alpha 1a.